Consider the following 313-residue polypeptide: Homoserine kinase (313 aa).

Residue proline 92–alanine 102 participates in ATP binding.

Belongs to the GHMP kinase family. Homoserine kinase subfamily.

The protein resides in the cytoplasm. It carries out the reaction L-homoserine + ATP = O-phospho-L-homoserine + ADP + H(+). It functions in the pathway amino-acid biosynthesis; L-threonine biosynthesis; L-threonine from L-aspartate: step 4/5. Functionally, catalyzes the ATP-dependent phosphorylation of L-homoserine to L-homoserine phosphate. This chain is Homoserine kinase, found in Aeropyrum pernix (strain ATCC 700893 / DSM 11879 / JCM 9820 / NBRC 100138 / K1).